The chain runs to 89 residues: UPF0223 protein BcerKBAB4_3787 (89 aa).

It belongs to the UPF0223 family.

The chain is UPF0223 protein BcerKBAB4_3787 from Bacillus mycoides (strain KBAB4) (Bacillus weihenstephanensis).